Consider the following 189-residue polypeptide: MKHQYFAKKSFLFISMLAAFKTSAFELPSVPFPAPGSDEILFVVRDTTFNTQAPVNVKVSDFWTNRNVKRKPYEDVYGQSVFTTSGTKWLTSYMTVNINDKDYTMAAVSGYKSGHSAVFVKSGQVQLQHSYNSVANFVGEDEGSIPSKMYLDETPEYFVNVEAYESGSGNILVMCISNKESFFECKHQQ.

An N-terminal signal peptide occupies residues 1–24; that stretch reads MKHQYFAKKSFLFISMLAAFKTSA. Cys175 and Cys185 are oxidised to a cystine.

Belongs to the TDH hemolysin family. Homodimer.

Bacterial hemolysins are exotoxins that attack blood cell membranes and cause cell rupture by mechanisms not clearly defined. The polypeptide is Thermostable direct hemolysin 1 (tdh1) (Vibrio parahaemolyticus serotype O3:K6 (strain RIMD 2210633)).